A 337-amino-acid chain; its full sequence is Glycerol-3-phosphate dehydrogenase [NAD(P)+] (337 aa).

3 residues coordinate NADPH: S12, W13, and K110. 3 residues coordinate sn-glycerol 3-phosphate: K110, G141, and S143. A145 lines the NADPH pocket. The sn-glycerol 3-phosphate site is built by K196, D249, S259, R260, and N261. The active-site Proton acceptor is K196. R260 is a binding site for NADPH. NADPH is bound by residues V284 and E286.

It belongs to the NAD-dependent glycerol-3-phosphate dehydrogenase family.

It is found in the cytoplasm. It carries out the reaction sn-glycerol 3-phosphate + NAD(+) = dihydroxyacetone phosphate + NADH + H(+). The enzyme catalyses sn-glycerol 3-phosphate + NADP(+) = dihydroxyacetone phosphate + NADPH + H(+). It participates in membrane lipid metabolism; glycerophospholipid metabolism. In terms of biological role, catalyzes the reduction of the glycolytic intermediate dihydroxyacetone phosphate (DHAP) to sn-glycerol 3-phosphate (G3P), the key precursor for phospholipid synthesis. The sequence is that of Glycerol-3-phosphate dehydrogenase [NAD(P)+] from Levilactobacillus brevis (strain ATCC 367 / BCRC 12310 / CIP 105137 / JCM 1170 / LMG 11437 / NCIMB 947 / NCTC 947) (Lactobacillus brevis).